The following is a 396-amino-acid chain: 1-deoxy-D-xylulose 5-phosphate reductoisomerase (396 aa).

Residues Thr10, Gly11, Ser12, Ile13, Gly36, Lys37, Asn38, and Asn124 each coordinate NADPH. Lys125 is a 1-deoxy-D-xylulose 5-phosphate binding site. Glu126 lines the NADPH pocket. Asp150 serves as a coordination point for Mn(2+). 1-deoxy-D-xylulose 5-phosphate-binding residues include Ser151, Glu152, Ser186, and His209. A Mn(2+)-binding site is contributed by Glu152. An NADPH-binding site is contributed by Gly215. Residues Ser222, Asn227, Lys228, and Glu231 each coordinate 1-deoxy-D-xylulose 5-phosphate. Glu231 is a Mn(2+) binding site.

Belongs to the DXR family. Mg(2+) is required as a cofactor. Requires Mn(2+) as cofactor.

It carries out the reaction 2-C-methyl-D-erythritol 4-phosphate + NADP(+) = 1-deoxy-D-xylulose 5-phosphate + NADPH + H(+). Its pathway is isoprenoid biosynthesis; isopentenyl diphosphate biosynthesis via DXP pathway; isopentenyl diphosphate from 1-deoxy-D-xylulose 5-phosphate: step 1/6. Functionally, catalyzes the NADPH-dependent rearrangement and reduction of 1-deoxy-D-xylulose-5-phosphate (DXP) to 2-C-methyl-D-erythritol 4-phosphate (MEP). This is 1-deoxy-D-xylulose 5-phosphate reductoisomerase from Glaesserella parasuis serovar 5 (strain SH0165) (Haemophilus parasuis).